Reading from the N-terminus, the 506-residue chain is Pyruvate kinase 2 (506 aa).

Residue Ser24 is modified to Phosphoserine. Position 51 (Arg51) interacts with substrate. K(+) is bound by residues Asn53, Ser55, Asp86, and Thr87. 53–56 is a binding site for ATP; it reads NFSH. Arg93 and Lys179 together coordinate ATP. Position 244 (Glu244) interacts with Mg(2+). Substrate-binding residues include Gly267, Asp268, and Thr300. Asp268 lines the Mg(2+) pocket.

The protein belongs to the pyruvate kinase family. In terms of assembly, homotetramer. Mg(2+) is required as a cofactor. The cofactor is K(+).

The enzyme catalyses pyruvate + ATP = phosphoenolpyruvate + ADP + H(+). It functions in the pathway carbohydrate degradation; glycolysis; pyruvate from D-glyceraldehyde 3-phosphate: step 5/5. Its activity is regulated as follows. Not activated by fructose-1,6-bisphosphate. Its function is as follows. May be used by cells under conditions in which the level of glycolytic flux is very low. The sequence is that of Pyruvate kinase 2 (PYK2) from Saccharomyces cerevisiae (strain ATCC 204508 / S288c) (Baker's yeast).